A 609-amino-acid polypeptide reads, in one-letter code: Non-structural glycoprotein (609 aa).

The first 24 residues, 1 to 24 (MDFLRQCTLIQVMILAITIRLTHG), serve as a signal peptide directing secretion. Residues 25–581 (GWTNFPESCV…EKDYWHEEYN (557 aa)) are Extracellular-facing. Asparagine 87, asparagine 375, asparagine 465, asparagine 472, asparagine 478, asparagine 506, asparagine 529, asparagine 551, and asparagine 562 each carry an N-linked (GlcNAc...) asparagine; by host glycan. A helical transmembrane segment spans residues 582-599 (MWGLSGLSFLLLLALFYN). At 600-609 (KIKRKIKRKS) the chain is on the cytoplasmic side.

The protein belongs to the ephemerovirus glycoprotein family.

Its subcellular location is the membrane. The polypeptide is Non-structural glycoprotein (GNS) (Adelaide River virus (ARV)).